The following is a 458-amino-acid chain: Phosphoglucosamine mutase (458 aa).

Residue S108 is the Phosphoserine intermediate of the active site. 4 residues coordinate Mg(2+): S108, D247, D249, and D251. S108 bears the Phosphoserine mark.

It belongs to the phosphohexose mutase family. Mg(2+) serves as cofactor. Post-translationally, activated by phosphorylation.

The catalysed reaction is alpha-D-glucosamine 1-phosphate = D-glucosamine 6-phosphate. Its function is as follows. Catalyzes the conversion of glucosamine-6-phosphate to glucosamine-1-phosphate. The sequence is that of Phosphoglucosamine mutase from Nitrosomonas eutropha (strain DSM 101675 / C91 / Nm57).